The primary structure comprises 384 residues: uncharacterized protein (384 aa).

A run of 10 helical transmembrane segments spans residues 11–31, 33–53, 66–86, 94–114, 153–173, 197–217, 224–244, 284–304, 309–329, and 342–362; these read LWFI…GISI, WMIG…AWLM, LALG…LSVL, FSVG…GYVL, LVQM…VILI, LAPV…CKAA, APWL…GAAV, IIIV…LSAV, LTGI…IAEM, and FVVA…PPFY.

This sequence belongs to the AbrB family.

The protein resides in the cell membrane. This is an uncharacterized protein from Bacillus subtilis (strain 168).